A 609-amino-acid chain; its full sequence is 2',5'-phosphodiesterase 12 (609 aa).

Residues 1–42 (MWRLPGARAALRVIRTAVEKLSRAEAGSQTAAGAMERAVVRC) constitute a mitochondrion transit peptide. The span at 89 to 99 (AAAAKKSRKSR) shows a compositional bias: basic residues. Disordered regions lie at residues 89 to 111 (AAAAKKSRKSRPNASGGAACSGP) and 206 to 230 (AEPEVGVPSSLSPSSPSSSWTETDV). Composition is skewed to low complexity over residues 100–111 (PNASGGAACSGP) and 213–224 (PSSLSPSSPSSS). S217 is subject to Phosphoserine. The Mg(2+) site is built by E351, D496, and N498. The Proton donor/acceptor role is filled by D496.

This sequence belongs to the CCR4/nocturin family. The cofactor is Mg(2+). Ubiquitous.

It localises to the mitochondrion matrix. It catalyses the reaction Exonucleolytic cleavage of poly(A) to 5'-AMP.. Enzyme that cleaves 2',5'-phosphodiester bond linking adenosines of the 5'-triphosphorylated oligoadenylates, triphosphorylated oligoadenylates referred as 2-5A modulates the 2-5A system. Degrades triphosphorylated 2-5A to produce AMP and ATP. Also cleaves 3',5'-phosphodiester bond of oligoadenylates. Plays a role as a negative regulator of the 2-5A system that is one of the major pathways for antiviral and antitumor functions induced by interferons (IFNs). Suppression of this enzyme increases cellular 2-5A levels and decreases viral replication in cultured small-airway epithelial cells and Hela cells. This is 2',5'-phosphodiesterase 12 (PDE12) from Homo sapiens (Human).